The chain runs to 413 residues: MQADLVLYNIGQLVTSRELDKTKKMDNIEVIENNGYIVIEKDKIVAVGSGEVLKEYLTPATEMVDLSGKLVTPGLIDSHTHLVHGGSRENEFAMKIAGVPYLEILEKGGGILSTLKSTRNASEQELIEKTLKSLRHMLELGVTTVEAKSGYGLNLEDELKQLEVTKILGYLQPVTLVSTFMAAHATPPEYKDNKEGYVQEVIKMLPIVKERNLAEFCDIFCEDKVFSVDESRRILTVAKELGYKLKIHADEIVSLGGVELAAELGATSAEHLMKITDSGINALANSNVIADLLPATSFNLMEHYAPARKMIEAGIQIALSTDYNPGSCPSENLQFVMQIGAAHLKMTPKEVFKSVTINAAKAIDKQDTIGSIEVGKKADITVFDAPSMAYFLYHFGINHTDSVYKNGKLVFKK.

Residues H79 and H81 each contribute to the Fe(3+) site. Zn(2+) contacts are provided by H79 and H81. 4-imidazolone-5-propanoate contacts are provided by R88, Y151, and H184. N-formimidoyl-L-glutamate is bound at residue Y151. H248 lines the Fe(3+) pocket. A Zn(2+)-binding site is contributed by H248. E251 lines the 4-imidazolone-5-propanoate pocket. D322 contributes to the Fe(3+) binding site. Zn(2+) is bound at residue D322. Positions 324 and 326 each coordinate N-formimidoyl-L-glutamate. S327 is a binding site for 4-imidazolone-5-propanoate.

This sequence belongs to the metallo-dependent hydrolases superfamily. HutI family. Zn(2+) is required as a cofactor. The cofactor is Fe(3+).

The protein localises to the cytoplasm. It catalyses the reaction 4-imidazolone-5-propanoate + H2O = N-formimidoyl-L-glutamate. The protein operates within amino-acid degradation; L-histidine degradation into L-glutamate; N-formimidoyl-L-glutamate from L-histidine: step 3/3. In terms of biological role, catalyzes the hydrolytic cleavage of the carbon-nitrogen bond in imidazolone-5-propanoate to yield N-formimidoyl-L-glutamate. It is the third step in the universal histidine degradation pathway. In Fusobacterium nucleatum subsp. nucleatum (strain ATCC 25586 / DSM 15643 / BCRC 10681 / CIP 101130 / JCM 8532 / KCTC 2640 / LMG 13131 / VPI 4355), this protein is Imidazolonepropionase.